Reading from the N-terminus, the 278-residue chain is Large ribosomal subunit protein uL2 (278 aa).

Disordered stretches follow at residues 1 to 59 and 222 to 278; these read MAIR…GGHK and RGAA…NKKR. The span at 16-27 shows a compositional bias: polar residues; sequence SSVSEFSEITRS. 2 stretches are compositionally biased toward basic residues: residues 45–59 and 269–278; these read VHGH…GGHK and VRRRRPNKKR.

It belongs to the universal ribosomal protein uL2 family. As to quaternary structure, part of the 50S ribosomal subunit. Forms a bridge to the 30S subunit in the 70S ribosome.

Functionally, one of the primary rRNA binding proteins. Required for association of the 30S and 50S subunits to form the 70S ribosome, for tRNA binding and peptide bond formation. It has been suggested to have peptidyltransferase activity; this is somewhat controversial. Makes several contacts with the 16S rRNA in the 70S ribosome. This is Large ribosomal subunit protein uL2 from Corynebacterium urealyticum (strain ATCC 43042 / DSM 7109).